We begin with the raw amino-acid sequence, 223 residues long: Cytidylate kinase (223 aa).

10-18 lines the ATP pocket; the sequence is GPASSGKST.

Belongs to the cytidylate kinase family. Type 1 subfamily.

It localises to the cytoplasm. It carries out the reaction CMP + ATP = CDP + ADP. The catalysed reaction is dCMP + ATP = dCDP + ADP. The sequence is that of Cytidylate kinase from Streptococcus pneumoniae (strain Hungary19A-6).